Reading from the N-terminus, the 475-residue chain is CAAX prenyl protease 1 homolog (475 aa).

The Lumenal segment spans residues 1 to 18 (MGMWASVDAMWDFPAEKR). Residues 19 to 39 (IFGAVLLFSWTVYLWETFLAQ) form a helical membrane-spanning segment. Topologically, residues 40–81 (RQRRIYKTTTRVPAELEQIMDSDTFEKSRLYQLDKSTFSFWS) are nuclear. A helical transmembrane segment spans residues 82–102 (GLYSEVEGTFILLFGGIPYLW). The Lumenal portion of the chain corresponds to 103 to 123 (RLSGQFCSSAGFGPEYEIIQS). The chain crosses the membrane as a helical span at residues 124 to 144 (LVFLLLATLFSALTGLPWSLY). The Nuclear portion of the chain corresponds to 145-170 (NTFVIEEKHGFNHQTLEFFMKDAIKK). A helical membrane pass occupies residues 171–191 (FIVTQCILLPVSALLLYIIKI). Residues 192-195 (GGDY) lie on the Lumenal side of the membrane. The chain crosses the membrane as a helical span at residues 196-216 (FFIYAWLFTLVVSLVLVTIYA). Residues 217 to 347 (DYIAPLFDKF…GHWKLGHTVK (131 aa)) lie on the Nuclear side of the membrane. Residues 293-314 (DNQEESGMEARNEGEGDSEEVK) form a disordered region. Basic and acidic residues predominate over residues 300–314 (MEARNEGEGDSEEVK). His335 contributes to the Zn(2+) binding site. The active site involves Glu336. Residue His339 participates in Zn(2+) binding. Residues 348-368 (NIIISQMNSFLCFFLFAVLIG) form a helical membrane-spanning segment. Over 369 to 382 (RRELFAAFGFYDSQ) the chain is Lumenal. A helical transmembrane segment spans residues 383-405 (PTLIGLLIIFQFIFSPYNEVLSF). The Nuclear segment spans residues 406–475 (CLTVLSRRFE…LQALKNAKQD (70 aa)). Glu415 serves as a coordination point for Zn(2+).

Belongs to the peptidase M48A family. Zn(2+) is required as a cofactor.

Its subcellular location is the endoplasmic reticulum membrane. The protein resides in the nucleus inner membrane. It is found in the early endosome membrane. It localises to the late endosome membrane. It catalyses the reaction Hydrolyzes the peptide bond -P2-(S-farnesyl or geranylgeranyl)C-P1'-P2'-P3'-COOH where P1' and P2' are amino acids with aliphatic side chains and P3' is any C-terminal residue.. Inhibited by HIV protease inhibitors, such as lopinavir, tipranavir and nelfinavir, leading to defects in lamin A/LMNA maturation and accumulation of prelamin-A/C precursors in cells. This causes defects in nuclear envelope integrity and release of DNA in the cytosol, activating the AIM2 inflammasome. Its function is as follows. Transmembrane metalloprotease whose catalytic activity is critical for processing lamin A/LMNA on the inner nuclear membrane and clearing clogged translocons on the endoplasmic reticulum. Proteolytically removes the C-terminal three residues of farnesylated proteins. Also plays an antiviral role independently of its protease activity by restricting enveloped RNA and DNA viruses. Mechanistically, controls IFITM antiviral pathway to hinder viruses from breaching the endosomal barrier by modulating membrane fluidity. This is CAAX prenyl protease 1 homolog from Mus musculus (Mouse).